Consider the following 494-residue polypeptide: Homeotic protein bicoid (494 aa).

3 disordered regions span residues 1 to 49, 149 to 210, and 263 to 293; these read MAQP…PPQF, RRRH…TAHM, and QQVH…AQQQ. The span at 14-40 shows a compositional bias: basic residues; it reads PLPHTHTHPHPHSHPHPHSHPHPHHQH. Positions 97–156 form a DNA-binding region, homeobox; the sequence is PRRTRTTFTSSQIAELEQHFLQGRYLTAPRLADLSAKLALGTAQVKIWFKNRRRRHKIQS. The segment covering 154 to 163 has biased composition (basic and acidic residues); it reads IQSDQHKDQS. Positions 433–440 are RNA-binding; sequence RGAAFAKF.

This sequence belongs to the paired homeobox family. Bicoid subfamily. In terms of assembly, interacts with Bin1; in vitro and yeast cells. Interacts with bin3. As to expression, maternal expression is an anterior cap concentrated in the cortical cytoplasm. Its transcript is produced maternally and sequestered near the anterior pole of the mature oocyte. After egg deposition, it is translated into protein, which diffuses toward the posterior, forming a long-range anterior gradient.

The protein localises to the nucleus. Its function is as follows. Segment polarity transcription factor that provides positional cues for the development of head and thoracic segments. Forms a protein concentration gradient that patterns the anterior-posterior axis during embryogenesis and promotes the expression of anterior gap genes, such as hunchback (hb), ocelliless (oc), and buttonhead (btd). Binds to regulatory DNA sequences containing a 5'-TAATCC-3' sequence motif. Also binds RNA. Interacts with Bin1 to repress transcription of bicoid target genes in the anterior tip of the embryo; a process known as retraction. The polypeptide is Homeotic protein bicoid (Drosophila melanogaster (Fruit fly)).